The chain runs to 150 residues: Nucleoside diphosphate kinase (150 aa).

Positions 9, 57, 85, 91, 102, and 112 each coordinate ATP. The Pros-phosphohistidine intermediate role is filled by His-115.

The protein belongs to the NDK family. The cofactor is Mg(2+).

The protein localises to the cytoplasm. The enzyme catalyses a 2'-deoxyribonucleoside 5'-diphosphate + ATP = a 2'-deoxyribonucleoside 5'-triphosphate + ADP. It catalyses the reaction a ribonucleoside 5'-diphosphate + ATP = a ribonucleoside 5'-triphosphate + ADP. Major role in the synthesis of nucleoside triphosphates other than ATP. The ATP gamma phosphate is transferred to the NDP beta phosphate via a ping-pong mechanism, using a phosphorylated active-site intermediate. The sequence is that of Nucleoside diphosphate kinase from Methanoregula boonei (strain DSM 21154 / JCM 14090 / 6A8).